A 141-amino-acid chain; its full sequence is Nucleoside triphosphatase NudI (141 aa).

A Nudix hydrolase domain is found at 1-141 (MRQRTIVCPL…RKTLSLKGLL (141 aa)). A Nudix box motif is present at residues 38-59 (GGVEPGERIEDALRREIREELG).

It belongs to the Nudix hydrolase family. NudI subfamily. Monomer. The cofactor is Mg(2+).

It carries out the reaction a ribonucleoside 5'-triphosphate + H2O = a ribonucleoside 5'-phosphate + diphosphate + H(+). The enzyme catalyses a 2'-deoxyribonucleoside 5'-triphosphate + H2O = a 2'-deoxyribonucleoside 5'-phosphate + diphosphate + H(+). The catalysed reaction is dUTP + H2O = dUMP + diphosphate + H(+). It catalyses the reaction dTTP + H2O = dTMP + diphosphate + H(+). It carries out the reaction dCTP + H2O = dCMP + diphosphate + H(+). Catalyzes the hydrolysis of nucleoside triphosphates, with a preference for pyrimidine deoxynucleoside triphosphates (dUTP, dTTP and dCTP). This is Nucleoside triphosphatase NudI from Escherichia fergusonii (strain ATCC 35469 / DSM 13698 / CCUG 18766 / IAM 14443 / JCM 21226 / LMG 7866 / NBRC 102419 / NCTC 12128 / CDC 0568-73).